A 491-amino-acid chain; its full sequence is Probable succinate-semialdehyde dehydrogenase [NADP(+)] (491 aa).

NADP(+) is bound by residues 163-164 (WN), 187-190 (KPAE), and 241-242 (GS). The Proton acceptor role is filled by Glu-263. Residue Leu-264 coordinates NADP(+). Catalysis depends on Cys-297, which acts as the Nucleophile. Position 394 (Glu-394) interacts with NADP(+).

The protein belongs to the aldehyde dehydrogenase family.

It carries out the reaction succinate semialdehyde + NADP(+) + H2O = succinate + NADPH + 2 H(+). The protein operates within amino-acid degradation; 4-aminobutanoate degradation. Catalyzes the NADP(+) dependent oxidation of succinate semialdehyde to succinate. This Sinorhizobium fredii (strain NBRC 101917 / NGR234) protein is Probable succinate-semialdehyde dehydrogenase [NADP(+)] (gabD).